The chain runs to 460 residues: Transcription factor AP-2-beta (460 aa).

Lys-21 participates in a covalent cross-link: Glycyl lysine isopeptide (Lys-Gly) (interchain with G-Cter in SUMO). The tract at residues His-30–Arg-139 is disordered. The span at Ser-35–Tyr-51 shows a compositional bias: polar residues. Low complexity predominate over residues Leu-121 to Leu-132. The residue at position 258 (Ser-258) is a Phosphoserine; by PKA. Residues Asn-435–Lys-460 form a disordered region. Over residues Thr-451–Lys-460 the composition is skewed to basic and acidic residues.

It belongs to the AP-2 family. Binds DNA as a dimer. Can form homodimers or heterodimers with other AP-2 family members. Interacts with CITED4. Interacts with UBE2I. Interacts with KCTD1; this interaction represses transcription activation. Interacts with CITED2 (via C-terminus); the interaction stimulates TFAP2B-transcriptional activity. Sumoylated on Lys-21; which inhibits transcriptional activity.

Its subcellular location is the nucleus. Its function is as follows. Sequence-specific DNA-binding protein that interacts with inducible viral and cellular enhancer elements to regulate transcription of selected genes. AP-2 factors bind to the consensus sequence 5'-GCCNNNGGC-3' and activate genes involved in a large spectrum of important biological functions including proper eye, face, body wall, limb and neural tube development. They also suppress a number of genes including MCAM/MUC18, C/EBP alpha and MYC. AP-2-beta appears to be required for normal face and limb development and for proper terminal differentiation and function of renal tubular epithelia. This chain is Transcription factor AP-2-beta (TFAP2B), found in Canis lupus familiaris (Dog).